A 306-amino-acid polypeptide reads, in one-letter code: Palmitoyl-protein thioesterase 1 (306 aa).

An N-terminal signal peptide occupies residues 1–27 (MASPSCLWLLAVALLPWTCAARALHHL). Cystine bridges form between Cys-45/Cys-46, Cys-96/Cys-128, and Cys-152/Cys-160. Residue Ser-115 is part of the active site. N-linked (GlcNAc...) asparagine glycosylation is found at Asn-197, Asn-212, and Asn-232. Active-site residues include Asp-233 and His-289.

The protein belongs to the palmitoyl-protein thioesterase family. In terms of assembly, interacts with CLN5, ATP5F1A and ATP5F1B. Glycosylated.

It is found in the lysosome. Its subcellular location is the secreted. The protein resides in the golgi apparatus. The protein localises to the endoplasmic reticulum. It catalyses the reaction S-hexadecanoyl-L-cysteinyl-[protein] + H2O = L-cysteinyl-[protein] + hexadecanoate + H(+). It carries out the reaction hexadecanoyl-CoA + H2O = hexadecanoate + CoA + H(+). The catalysed reaction is S-hexadecanoyl-N-acetylcysteamine + H2O = N-acetylcysteamine + hexadecanoate + H(+). The enzyme catalyses S-hexadecanoyl-N-acetylcysteine methyl ester + H2O = N-acetylcysteine methyl ester + hexadecanoate + H(+). With respect to regulation, palmitoylation reduces PPT1 enzymatic activity. Has thioesterase activity against fatty acid thioesters with 14 -18 carbons, including palmitoyl-CoA, S-palmitoyl-N-acetylcysteamine, and palmitoylated proteins. In contrast to PPT2, PPT1 can hydrolyze palmitoylated proteins and palmitoylcysteine. This Macaca fascicularis (Crab-eating macaque) protein is Palmitoyl-protein thioesterase 1 (PPT1).